The sequence spans 90 residues: Probable Fe(2+)-trafficking protein (90 aa).

Belongs to the Fe(2+)-trafficking protein family.

Could be a mediator in iron transactions between iron acquisition and iron-requiring processes, such as synthesis and/or repair of Fe-S clusters in biosynthetic enzymes. In Coxiella burnetii (strain CbuK_Q154) (Coxiella burnetii (strain Q154)), this protein is Probable Fe(2+)-trafficking protein.